Consider the following 113-residue polypeptide: Protein ORF3 (113 aa).

2 hydrophobic regions span residues 1-21 and 32-52; these read MGSP…CLCC and AVVG…GLIL. Residues 27-67 form an interaction with host HPX region; the sequence is ASRLAAVVGGATAVPAVVSGVTGLILSPSPSPIFIQPTPSL. The segment at 47 to 71 is interaction with the capsid protein; the sequence is VTGLILSPSPSPIFIQPTPSLPMSF. Ser-70 is modified (phosphoserine; by host). The homodimerization, and interaction with host AMBP/bikunin stretch occupies residues 71–113; that stretch reads FHNPGLELALDSRPAPLAPLGVTSPSAPPLPPVVDLPQLGLRR. Residues 89–113 form a disordered region; sequence PLGVTSPSAPPLPPVVDLPQLGLRR. The segment at 94 to 103 is interaction with host SRC, HCK, FYN, PIK3R3 and GRB2; the sequence is SPSAPPLPPV. Residues 95-98 carry the PTAP/PSAP motif motif; that stretch reads PSAP.

Belongs to the hepevirus ORF3 protein family. Forms homooligomers. Interacts with host SRC, HCK, FYN, PIK3R3 and GRB2 (via SH3 domain); binding does not activate the kinases. Interacts with host AMBP/bikunin and AMBP/alpha-1-microglobulin peptides. Interacts with host HPX/hemopexin. Interacts (when phosphorylated) with capsid protein ORF2. Interacts with host TSG101; this interaction plays a role in viral release from the host cell. Interacts with host SIRPA; this interaction down-regulates the phosphorylation of host IRF3. In terms of processing, palmitoylated in the N-terminus.

It localises to the host endoplasmic reticulum membrane. The protein resides in the host cytoplasm. The protein localises to the host cytoskeleton. It is found in the virion. Its subcellular location is the host cell membrane. Small multifunctional phosphoprotein involved in virion morphogenesis, egress and counteracting host innate immunity. Plays critical roles in the final steps of viral release by interacting with host TSG101, a member of the vacuolar protein-sorting pathway and using other cellular host proteins involved in vesicle formation pathway. Also acts as a viroporin and forms ion conductive pores allowing viral particle release. Impairs the generation of type I interferon by down-regulating host TLR3 and TLR7 as well as their downstream signaling pathways. Down-regulates the phosphorylation of host IRF3 via the interaction with host SIRP-alpha, thereby inhibiting IFN-I expression. Interacts with host microtubules. This is Protein ORF3 from Bandicota bengalensis (lesser bandicoot rat).